Here is a 103-residue protein sequence, read N- to C-terminus: Small ribosomal subunit protein bS6c (103 aa).

Belongs to the bacterial ribosomal protein bS6 family.

The protein localises to the plastid. The protein resides in the chloroplast. In terms of biological role, binds together with bS18 to 16S ribosomal RNA. In Gracilaria tenuistipitata var. liui (Red alga), this protein is Small ribosomal subunit protein bS6c.